A 289-amino-acid polypeptide reads, in one-letter code: Protein SET (289 aa).

The interval 1 to 45 (MAPKRQSAILPQPKKPRPAAAPKLEDKSASPGLPKGEKEQQEAIE) is disordered. Position 2 is a n,N,N-trimethylalanine; by NTM1 (A2). S7 is subject to Phosphoserine. The residue at position 11 (P11) is an N6-acetyllysine. A Phosphoserine modification is found at K15. An N6-acetyllysine modification is found at K23. Phosphothreonine is present on K23. S28 carries the post-translational modification Phosphoserine. Residues 31–77 (PGLPKGEKEQQEAIEHIDEVQNEIDRLNEQASEEILKVEQKYNKLRQ) are dimerization. Residues 35 to 45 (KGEKEQQEAIE) show a composition bias toward basic and acidic residues. S62 bears the Phosphoserine mark. N6-acetyllysine is present on K67. The segment at 78 to 224 (PFFQKRSELI…ELGEVIKDDI (147 aa)) is earmuff domain. Position 145 is a phosphotyrosine (Y145). K149 is subject to N6-acetyllysine. K153 is covalently cross-linked (Glycyl lysine isopeptide (Lys-Gly) (interchain with G-Cter in ubiquitin)). Disordered regions lie at residues 157–206 (LNES…TWFT) and 235–289 (PDMD…GEDD). The span at 168–180 (TEIKWKSGKDLTK) shows a compositional bias: basic and acidic residues. K171 is modified (N6-acetyllysine). The span at 236-289 (DMDDEEGEAEDDDDDDEEEEGLEDIDEEGDEDEGEEDDDEDEGEEGEEDEGEDD) shows a compositional bias: acidic residues.

It belongs to the nucleosome assembly protein (NAP) family. As to quaternary structure, headphone-shaped homodimer. Isoform 1 and isoform 2 interact directly with each other and with ANP32A within the tripartite INHAT (inhibitor of acetyltransferases) complex. Isoform 1 and isoform 2 interact also with histones. Isoform 2 is a omponent of the SET complex, composed of at least ANP32A, APEX1, HMGB2, NME1, SET and TREX1, but not NME2 or TREX2. Within this complex, directly interacts with ANP32A, NME1, HMGB2 and TREX1; the interaction with ANP32A is enhanced after cleavage. Interacts with APBB1, CHTOP, SETBP1, SGO1. In terms of processing, some glutamate residues are glycylated by TTLL8. This modification occurs exclusively on glutamate residues and results in a glycine chain on the gamma-carboxyl group. Post-translationally, N-terminus of isoform 1 is methylated by METTL11A/NTM1. Mainly trimethylated. Cleaved after Lys-176 by GZMA. The cleavage inhibits its nucleosome assembly activity and disrupts the inhibition on NME1.

Its subcellular location is the cytoplasm. It localises to the cytosol. The protein localises to the endoplasmic reticulum. The protein resides in the nucleus. It is found in the nucleoplasm. Its function is as follows. Multitasking protein, involved in apoptosis, transcription, nucleosome assembly and histone chaperoning. Isoform 2 anti-apoptotic activity is mediated by inhibition of the GZMA-activated DNase, NME1. In the course of cytotoxic T-lymphocyte (CTL)-induced apoptosis, GZMA cleaves SET, disrupting its binding to NME1 and releasing NME1 inhibition. Isoform 1 and isoform 2 are potent inhibitors of protein phosphatase 2A. Isoform 1 and isoform 2 inhibit EP300/CREBBP and PCAF-mediated acetylation of histones (HAT) and nucleosomes, most probably by masking the accessibility of lysines of histones to the acetylases. The predominant target for inhibition is histone H4. HAT inhibition leads to silencing of HAT-dependent transcription and prevents active demethylation of DNA. Both isoforms stimulate DNA replication of the adenovirus genome complexed with viral core proteins; however, isoform 2 specific activity is higher. This chain is Protein SET (Set), found in Mus musculus (Mouse).